The sequence spans 428 residues: 3-phosphoshikimate 1-carboxyvinyltransferase (428 aa).

3-phosphoshikimate contacts are provided by Lys-19, Ser-20, and Arg-24. Phosphoenolpyruvate is bound at residue Lys-19. 2 residues coordinate phosphoenolpyruvate: Gly-91 and Arg-119. 3-phosphoshikimate-binding residues include Ser-164, Gln-166, Asp-312, and Lys-339. Gln-166 contributes to the phosphoenolpyruvate binding site. Asp-312 serves as the catalytic Proton acceptor. Residues Arg-343 and Arg-386 each contribute to the phosphoenolpyruvate site.

It belongs to the EPSP synthase family. Monomer.

It is found in the cytoplasm. It catalyses the reaction 3-phosphoshikimate + phosphoenolpyruvate = 5-O-(1-carboxyvinyl)-3-phosphoshikimate + phosphate. The protein operates within metabolic intermediate biosynthesis; chorismate biosynthesis; chorismate from D-erythrose 4-phosphate and phosphoenolpyruvate: step 6/7. In terms of biological role, catalyzes the transfer of the enolpyruvyl moiety of phosphoenolpyruvate (PEP) to the 5-hydroxyl of shikimate-3-phosphate (S3P) to produce enolpyruvyl shikimate-3-phosphate and inorganic phosphate. In Bacillus velezensis (strain DSM 23117 / BGSC 10A6 / LMG 26770 / FZB42) (Bacillus amyloliquefaciens subsp. plantarum), this protein is 3-phosphoshikimate 1-carboxyvinyltransferase.